The primary structure comprises 393 residues: Na(+)/H(+) antiporter NhaA (393 aa).

Helical transmembrane passes span A18 to W38, M65 to I85, M101 to I121, G131 to G151, V160 to F180, N184 to N204, A210 to I230, A260 to V280, I298 to I318, F334 to L354, and I369 to S389.

Belongs to the NhaA Na(+)/H(+) (TC 2.A.33) antiporter family.

The protein localises to the cell inner membrane. The catalysed reaction is Na(+)(in) + 2 H(+)(out) = Na(+)(out) + 2 H(+)(in). Na(+)/H(+) antiporter that extrudes sodium in exchange for external protons. The polypeptide is Na(+)/H(+) antiporter NhaA (Albidiferax ferrireducens (strain ATCC BAA-621 / DSM 15236 / T118) (Rhodoferax ferrireducens)).